The following is a 443-amino-acid chain: Aklavinone 7-beta-L-rhodosaminyltransferase (443 aa).

Residues 1–23 form the signal peptide; sequence MRVLLTSFALDAHFNGSVPLAWA.

Belongs to the glycosyltransferase 28 family.

The catalysed reaction is dTDP-beta-L-rhodosamine + aklavinone = aclacinomycin T + dTDP + 2 H(+). With respect to regulation, the activity of AknS is substantially increased by the addition of the accessory protein AknT. In terms of biological role, involved in the biosynthesis of the anthracycline antitumor agent aclacinomycin A. Catalyzes the transfer of the proximal deoxyhexose, L-rhodosamine, from dTDP-beta-L-rhodosamine to the C7-OH of aklavinone aglycone to yield aclacinomycin T (rhodosaminyl-aklavinone). It can also use dTDP-2-deoxy-beta-L-fucose, TDP-2-deoxyfucose, dTDP-4-amino-2-deoxyrhamnose, TDP-L-rhodosamine as sugar donor and epsilon-rhodomycinone as sugar acceptor. The protein is Aklavinone 7-beta-L-rhodosaminyltransferase of Streptomyces galilaeus.